Here is a 329-residue protein sequence, read N- to C-terminus: Acetyl-coenzyme A carboxylase carboxyl transferase subunit alpha (329 aa).

One can recognise a CoA carboxyltransferase C-terminal domain in the interval 40 to 294 (QLETLAARRR…KTSILRHLTE (255 aa)).

This sequence belongs to the AccA family. As to quaternary structure, acetyl-CoA carboxylase is a heterohexamer composed of biotin carboxyl carrier protein (AccB), biotin carboxylase (AccC) and two subunits each of ACCase subunit alpha (AccA) and ACCase subunit beta (AccD).

It is found in the cytoplasm. It catalyses the reaction N(6)-carboxybiotinyl-L-lysyl-[protein] + acetyl-CoA = N(6)-biotinyl-L-lysyl-[protein] + malonyl-CoA. It functions in the pathway lipid metabolism; malonyl-CoA biosynthesis; malonyl-CoA from acetyl-CoA: step 1/1. Its function is as follows. Component of the acetyl coenzyme A carboxylase (ACC) complex. First, biotin carboxylase catalyzes the carboxylation of biotin on its carrier protein (BCCP) and then the CO(2) group is transferred by the carboxyltransferase to acetyl-CoA to form malonyl-CoA. In Prochlorococcus marinus (strain SARG / CCMP1375 / SS120), this protein is Acetyl-coenzyme A carboxylase carboxyl transferase subunit alpha.